The sequence spans 338 residues: Aspartate carbamoyltransferase catalytic subunit (338 aa).

R72 and T73 together coordinate carbamoyl phosphate. An L-aspartate-binding site is contributed by K100. 3 residues coordinate carbamoyl phosphate: R122, H152, and Q155. L-aspartate-binding residues include R186 and R243. Carbamoyl phosphate contacts are provided by G284 and P285.

The protein belongs to the aspartate/ornithine carbamoyltransferase superfamily. ATCase family. Heterododecamer (2C3:3R2) of six catalytic PyrB chains organized as two trimers (C3), and six regulatory PyrI chains organized as three dimers (R2).

The catalysed reaction is carbamoyl phosphate + L-aspartate = N-carbamoyl-L-aspartate + phosphate + H(+). It participates in pyrimidine metabolism; UMP biosynthesis via de novo pathway; (S)-dihydroorotate from bicarbonate: step 2/3. Functionally, catalyzes the condensation of carbamoyl phosphate and aspartate to form carbamoyl aspartate and inorganic phosphate, the committed step in the de novo pyrimidine nucleotide biosynthesis pathway. The sequence is that of Aspartate carbamoyltransferase catalytic subunit from Acinetobacter baumannii (strain AB307-0294).